The following is a 478-amino-acid chain: H(+)/Cl(-) exchange transporter ClcA (478 aa).

Residues 1–32 (MTHSTQQLSPEGVAEGKRGRLIRELVNRDKTP) lie on the Cytoplasmic side of the membrane. Residues 33–69 (LIILIMAAVVGVVTGLLGVAFDRGVDWVQQQRLLALA) traverse the membrane as a helical segment. Residues 70–76 (NVADSAL) are Periplasmic-facing. A helical membrane pass occupies residues 77 to 100 (LVWPLAFIMSALLAMMGYFLVSRF). The Selectivity filter part_1 signature appears at 106 to 110 (GSGIP). Position 107 (serine 107) interacts with chloride. Positions 109-116 (IPEIEGAM) form an intramembrane region, helical. The Cytoplasmic portion of the chain corresponds to 117 to 123 (EEMRPVR). 2 helical membrane passes run 124 to 141 (WWRV…TLGA) and 148 to 166 (EGPM…VDIF). The short motif at 146–150 (GREGP) is the Selectivity filter part_2 element. At 167-176 (RLRSPEARHS) the chain is on the cytoplasmic side. 2 intramembrane regions (helical) span residues 177-189 (LLAT…LSAA) and 193-201 (PLAGILFVI). Residues 202-214 (EEMRSQFRYSLVS) lie on the Cytoplasmic side of the membrane. The chain crosses the membrane as a helical span at residues 215-232 (IKAVFIGVITSTIVYRYF). Residues 233–252 (NGERAIIEVGKLSDAPLNTL) lie on the Periplasmic side of the membrane. A helical transmembrane segment spans residues 253 to 281 (WLYLLLGIIFGAVGVIFNALIFRTQDMFV). The Cytoplasmic portion of the chain corresponds to 282-287 (RFHGGD). Residues 288 to 309 (WRKLVLIGGLLGGMCGLLALLH) traverse the membrane as a helical segment. Topologically, residues 310 to 329 (GNAVGGGFALIPIAAAGNFS) are periplasmic. Helical transmembrane passes span 330–349 (IGML…LCFG) and 355–376 (GIFA…LSCA). A Selectivity filter part_3 motif is present at residues 355 to 359 (GIFAP). Residues isoleucine 356 and phenylalanine 357 each contribute to the chloride site. Over 377-386 (HFFPQYGIEA) the chain is Periplasmic. The helical intramembrane region spans 387 to 401 (GTFAIAGMGALFAAS). The note=Loop between two helices intramembrane region spans 402-404 (VRA). The helical intramembrane region spans 405–416 (PLTGIVLVLEMT). The note=Loop between two helices intramembrane region spans 417–421 (DNYQL). The chain crosses the membrane as a helical span at residues 422–438 (ILPMIVTCLGATLIAQF). Residues 439–478 (MGGKPLYSAILARTLAKQEQARATVIAQEPAVENTPQTGR) lie on the Cytoplasmic side of the membrane. Tyrosine 445 lines the chloride pocket.

This sequence belongs to the chloride channel (TC 2.A.49) family. ClcA subfamily. As to quaternary structure, homodimer.

The protein resides in the cell inner membrane. It carries out the reaction 2 chloride(in) + H(+)(out) = 2 chloride(out) + H(+)(in). Proton-coupled chloride transporter. Functions as antiport system and exchanges two chloride ions for 1 proton. Probably acts as an electrical shunt for an outwardly-directed proton pump that is linked to amino acid decarboxylation, as part of the extreme acid resistance (XAR) response. The sequence is that of H(+)/Cl(-) exchange transporter ClcA from Yersinia pseudotuberculosis serotype IB (strain PB1/+).